The chain runs to 716 residues: 1,4-alpha-glucan branching enzyme GlgB (716 aa).

Asp398 acts as the Nucleophile in catalysis. The active-site Proton donor is Glu451.

The protein belongs to the glycosyl hydrolase 13 family. GlgB subfamily. As to quaternary structure, monomer.

It catalyses the reaction Transfers a segment of a (1-&gt;4)-alpha-D-glucan chain to a primary hydroxy group in a similar glucan chain.. It functions in the pathway glycan biosynthesis; glycogen biosynthesis. Catalyzes the formation of the alpha-1,6-glucosidic linkages in glycogen by scission of a 1,4-alpha-linked oligosaccharide from growing alpha-1,4-glucan chains and the subsequent attachment of the oligosaccharide to the alpha-1,6 position. This chain is 1,4-alpha-glucan branching enzyme GlgB, found in Nitrobacter hamburgensis (strain DSM 10229 / NCIMB 13809 / X14).